A 442-amino-acid polypeptide reads, in one-letter code: Signal recognition particle 54 kDa protein (442 aa).

Residues 106–113, 186–190, and 244–247 each bind GTP; these read GLQGSGKT, DTAGR, and TKLD.

This sequence belongs to the GTP-binding SRP family. SRP54 subfamily. In terms of assembly, part of the signal recognition particle protein translocation system, which is composed of SRP and FtsY. Archaeal SRP consists of a 7S RNA molecule of 300 nucleotides and two protein subunits: SRP54 and SRP19.

The protein localises to the cytoplasm. The catalysed reaction is GTP + H2O = GDP + phosphate + H(+). In terms of biological role, involved in targeting and insertion of nascent membrane proteins into the cytoplasmic membrane. Binds to the hydrophobic signal sequence of the ribosome-nascent chain (RNC) as it emerges from the ribosomes. The SRP-RNC complex is then targeted to the cytoplasmic membrane where it interacts with the SRP receptor FtsY. In Methanothermobacter thermautotrophicus (strain ATCC 29096 / DSM 1053 / JCM 10044 / NBRC 100330 / Delta H) (Methanobacterium thermoautotrophicum), this protein is Signal recognition particle 54 kDa protein.